Reading from the N-terminus, the 350-residue chain is Nicotinate-nucleotide--dimethylbenzimidazole phosphoribosyltransferase (350 aa).

E317 (proton acceptor) is an active-site residue.

Belongs to the CobT family.

The enzyme catalyses 5,6-dimethylbenzimidazole + nicotinate beta-D-ribonucleotide = alpha-ribazole 5'-phosphate + nicotinate + H(+). Its pathway is nucleoside biosynthesis; alpha-ribazole biosynthesis; alpha-ribazole from 5,6-dimethylbenzimidazole: step 1/2. Catalyzes the synthesis of alpha-ribazole-5'-phosphate from nicotinate mononucleotide (NAMN) and 5,6-dimethylbenzimidazole (DMB). The sequence is that of Nicotinate-nucleotide--dimethylbenzimidazole phosphoribosyltransferase from Shewanella putrefaciens (strain CN-32 / ATCC BAA-453).